The following is a 232-amino-acid chain: Rho-related GTP-binding protein Rho6 (232 aa).

Residues 23-28, 38-45, 67-71, 125-128, and 169-170 each bind GTP; these read QCGKTA, YPETYVPT, DTSGS, CKTD, and AF. Positions 42-50 match the Effector region motif; that stretch reads YVPTVFENY. Cys-229 is modified (cysteine methyl ester). Residue Cys-229 is the site of S-geranylgeranyl cysteine attachment. Positions 230–232 are cleaved as a propeptide — removed in mature form; it reads SIM.

It belongs to the small GTPase superfamily. Rho family. As to quaternary structure, binds GRB7 and PLXNB1. Interacts with PLXNA2. Interacts with UBXD5.

It localises to the cell membrane. The protein resides in the cytoplasm. The protein localises to the cytoskeleton. Lacks intrinsic GTPase activity. Has a low affinity for GDP, and constitutively binds GTP. Controls rearrangements of the actin cytoskeleton. Induces the Rac-dependent neuritic process formation in part by disruption of the cortical actin filaments. Causes the formation of many neuritic processes from the cell body with disruption of the cortical actin filaments. The protein is Rho-related GTP-binding protein Rho6 (RND1) of Bos taurus (Bovine).